The following is a 60-amino-acid chain: Large ribosomal subunit protein uL30 (60 aa).

Belongs to the universal ribosomal protein uL30 family. Part of the 50S ribosomal subunit.

In Shewanella baltica (strain OS223), this protein is Large ribosomal subunit protein uL30.